A 318-amino-acid chain; its full sequence is Rhomboid-related protein 4 (318 aa).

Residues 1-21 are Cytoplasmic-facing; the sequence is MQRRSRGINTGLILLLSQIFH. Residues 22–42 traverse the membrane as a helical segment; it reads VGINNIPPVTLATLALNIWFF. Residues 43–106 are Extracellular-facing; sequence LNPQKPLYSS…RRLGSRWFAY (64 aa). Residues 107–127 form a helical membrane-spanning segment; the sequence is VITTFSVLTGVVYLLLQFAVA. Over 128–137 the chain is Cytoplasmic; that stretch reads EFMDEPDFKR. A helical membrane pass occupies residues 138–154; it reads SCAVGFSGVLFALKVLN. Serine 144 serves as the catalytic Nucleophile. The Extracellular segment spans residues 155-179; it reads NHYCPGGFVNILGFPVPNRFACWVE. Residues 180 to 204 form a helical membrane-spanning segment; sequence LVAIHLFSPGTSFAGHQAGILVGLM. Residue histidine 195 is part of the active site. At 205–318 the chain is on the cytoplasmic side; it reads YTQGPLKKIM…RQRLHRFDSQ (114 aa). A ubiquitin-binding domain (UBD) region spans residues 271–286; it reads SEEEQLERALQASLWD. The tract at residues 285-318 is disordered; sequence WDRGHTRNSPPPYGFHLSPEEEMRRQRLHRFDSQ. Residues 302–318 show a composition bias toward basic and acidic residues; it reads SPEEEMRRQRLHRFDSQ. The interval 303-318 is VCP/p97-interacting motif (VIM); the sequence is PEEEMRRQRLHRFDSQ.

This sequence belongs to the peptidase S54 family. Interacts with BIK and STEAP3. Interacts (via C-terminal domain) with VCP. Interacts with ubiquitin and ubiquitinated proteins.

The protein resides in the endoplasmic reticulum membrane. It localises to the mitochondrion membrane. It catalyses the reaction Cleaves type-1 transmembrane domains using a catalytic dyad composed of serine and histidine that are contributed by different transmembrane domains.. Inhibited by aprotinin. Its function is as follows. Intramembrane-cleaving serine protease that cleaves single transmembrane or multi-pass membrane proteins in the hydrophobic plane of the membrane, luminal loops and juxtamembrane regions. Involved in regulated intramembrane proteolysis and the subsequent release of functional polypeptides from their membrane anchors. Functional component of endoplasmic reticulum-associated degradation (ERAD) for misfolded membrane proteins. Required for the degradation process of some specific misfolded endoplasmic reticulum (ER) luminal proteins. Participates in the transfer of misfolded proteins from the ER to the cytosol, where they are destroyed by the proteasome in a ubiquitin-dependent manner. Functions in BIK, MPZ, PKD1, PTCRA, RHO, STEAP3 and TRAC processing. Involved in the regulation of exosomal secretion; inhibits the TSAP6-mediated secretion pathway. Involved in the regulation of apoptosis; modulates BIK-mediated apoptotic activity. Also plays a role in the regulation of spermatogenesis; inhibits apoptotic activity in spermatogonia. This Pongo abelii (Sumatran orangutan) protein is Rhomboid-related protein 4 (RHBDD1).